The sequence spans 608 residues: Developmental regulatory protein wetA (608 aa).

7 disordered regions span residues 54-88, 102-125, 146-186, 202-226, 309-352, 447-544, and 556-576; these read ADHH…GVST, VDAT…VDPR, VSMS…MTRK, SKLR…NPPR, WPHQ…HAVP, AQTY…GDIG, and LMTG…EREA. Composition is skewed to low complexity over residues 77–88, 107–119, and 163–175; these read ESTASASSGVST, PSQP…PGAS, and SSPG…SQPS. Residues 313–338 show a composition bias toward basic residues; that stretch reads QHPHPHPHPHHPQAHTHPHPHPHPHP. Low complexity-rich tracts occupy residues 339-350 and 502-517; these read HQQAVAGHPQHA and SSNG…SGRG.

Belongs to the wetA family.

Its function is as follows. AbaA and wetA are pivotal regulators of conidiophore development and conidium maturation. They act individually and together to regulate their own expression and that of numerous other sporulation-specific genes. Functions to maintain conidial dormancy by suppressing microcycle conidiation. This chain is Developmental regulatory protein wetA, found in Gibberella zeae (strain ATCC MYA-4620 / CBS 123657 / FGSC 9075 / NRRL 31084 / PH-1) (Wheat head blight fungus).